A 303-amino-acid chain; its full sequence is Tyrosine recombinase XerC (303 aa).

The region spanning 3-89 is the Core-binding (CB) domain; sequence IQNDQWVSAF…TLRSFYQFLV (87 aa). One can recognise a Tyr recombinase domain in the interval 110–297; it reads KLPSFLYEEE…TKDRLRDVYR (188 aa). Residues arginine 150, lysine 174, histidine 249, arginine 252, and histidine 275 contribute to the active site. The O-(3'-phospho-DNA)-tyrosine intermediate role is filled by tyrosine 284.

The protein belongs to the 'phage' integrase family. XerC subfamily. Forms a cyclic heterotetrameric complex composed of two molecules of XerC and two molecules of XerD.

It is found in the cytoplasm. Site-specific tyrosine recombinase, which acts by catalyzing the cutting and rejoining of the recombining DNA molecules. The XerC-XerD complex is essential to convert dimers of the bacterial chromosome into monomers to permit their segregation at cell division. It also contributes to the segregational stability of plasmids. This chain is Tyrosine recombinase XerC, found in Halalkalibacterium halodurans (strain ATCC BAA-125 / DSM 18197 / FERM 7344 / JCM 9153 / C-125) (Bacillus halodurans).